The sequence spans 226 residues: Protein YOP1 homolog (226 aa).

A disordered region spans residues 1–25 (MRMSKLYKNKEKENEKPSNEPPIKQ). The Cytoplasmic segment spans residues 1-72 (MRMSKLYKNK…IEFGYKLGIK (72 aa)). Over residues 8–18 (KNKEKENEKPS) the composition is skewed to basic and acidic residues. A helical transmembrane segment spans residues 73 to 92 (PSYIVVFGGSALFISLVLGW). Residues 93 to 94 (GA) lie on the Lumenal side of the membrane. Residues 95–113 (ALICNLVGFAYPAYQSFKA) traverse the membrane as a helical segment. Topologically, residues 114-123 (VESQGHAETK) are cytoplasmic. Residues 124 to 140 (LWLTYWVVFSLFFFIEY) form a helical membrane-spanning segment. At 141 to 143 (LID) the chain is on the lumenal side. Residues 144-162 (IILFWIPFYYVIKLLFLLY) form a helical membrane-spanning segment. At 163 to 226 (LYMPQVRGAE…VQEGVRRRNV (64 aa)) the chain is on the cytoplasmic side.

The protein belongs to the DP1 family. As to quaternary structure, may form oligomers.

The protein localises to the endoplasmic reticulum membrane. Required to generate and maintain the structure of the tubular endoplasmic reticulum network and the digestive (food) vacuole. Induces high curvature in membranes and causes membrane tubule formation. This is Protein YOP1 homolog from Plasmodium berghei (strain Anka).